We begin with the raw amino-acid sequence, 360 residues long: uncharacterized protein (360 aa).

A compositionally biased stretch (acidic residues) spans 22–32; it reads EEDVEPNEEAE. A disordered region spans residues 22 to 55; sequence EEDVEPNEEAEGPGGVHKKRRGARKKNRRQRMEG. The span at 37 to 50 shows a compositional bias: basic residues; sequence VHKKRRGARKKNRR.

This is an uncharacterized protein from Caenorhabditis elegans.